The following is a 549-amino-acid chain: Chaperonin GroEL (549 aa).

Residues 30 to 33 (TLGP), Lys-51, 87 to 91 (DGTTT), Gly-415, and Asp-495 each bind ATP.

Belongs to the chaperonin (HSP60) family. As to quaternary structure, forms a cylinder of 14 subunits composed of two heptameric rings stacked back-to-back. Interacts with the co-chaperonin GroES.

The protein localises to the cytoplasm. It carries out the reaction ATP + H2O + a folded polypeptide = ADP + phosphate + an unfolded polypeptide.. Functionally, together with its co-chaperonin GroES, plays an essential role in assisting protein folding. The GroEL-GroES system forms a nano-cage that allows encapsulation of the non-native substrate proteins and provides a physical environment optimized to promote and accelerate protein folding. This chain is Chaperonin GroEL, found in Hahella chejuensis (strain KCTC 2396).